A 211-amino-acid chain; its full sequence is tRNA (pseudouridine(54)-N(1))-methyltransferase (211 aa).

Positions 128, 150, and 183 each coordinate S-adenosyl-L-methionine.

This sequence belongs to the methyltransferase superfamily. TrmY family. Homodimer.

It is found in the cytoplasm. The enzyme catalyses pseudouridine(54) in tRNA + S-adenosyl-L-methionine = N(1)-methylpseudouridine(54) in tRNA + S-adenosyl-L-homocysteine + H(+). Functionally, specifically catalyzes the N1-methylation of pseudouridine at position 54 (Psi54) in tRNAs. In Methanosarcina mazei (strain ATCC BAA-159 / DSM 3647 / Goe1 / Go1 / JCM 11833 / OCM 88) (Methanosarcina frisia), this protein is tRNA (pseudouridine(54)-N(1))-methyltransferase.